The primary structure comprises 214 residues: Thymidylate kinase (214 aa).

10-17 (GPDGAGKT) lines the ATP pocket.

The protein belongs to the thymidylate kinase family.

It catalyses the reaction dTMP + ATP = dTDP + ADP. Functionally, phosphorylation of dTMP to form dTDP in both de novo and salvage pathways of dTTP synthesis. This chain is Thymidylate kinase, found in Latilactobacillus sakei subsp. sakei (strain 23K) (Lactobacillus sakei subsp. sakei).